The sequence spans 390 residues: Stearoyl-[acyl-carrier-protein] 9-desaturase, chloroplastic (390 aa).

Residues 1 to 27 (MALKLCFPPHKMPSFPDARIRSHRVFM) constitute a chloroplast transit peptide. Residues glutamate 132, glutamate 170, histidine 173, glutamate 223, glutamate 256, and histidine 259 each coordinate Fe cation.

This sequence belongs to the fatty acid desaturase type 2 family. As to quaternary structure, homodimer. Fe(2+) serves as cofactor.

The protein localises to the plastid. Its subcellular location is the chloroplast. The enzyme catalyses octadecanoyl-[ACP] + 2 reduced [2Fe-2S]-[ferredoxin] + O2 + 2 H(+) = (9Z)-octadecenoyl-[ACP] + 2 oxidized [2Fe-2S]-[ferredoxin] + 2 H2O. Its pathway is lipid metabolism; fatty acid metabolism. Converts stearoyl-ACP to oleoyl-ACP by introduction of a cis double bond between carbons 9 and 10 of the acyl chain. This chain is Stearoyl-[acyl-carrier-protein] 9-desaturase, chloroplastic, found in Olea europaea (Common olive).